The sequence spans 380 residues: uncharacterized protein (380 aa).

Helical transmembrane passes span 15–35, 45–65, 75–95, 98–118, 123–143, 182–202, 217–237, 303–323, and 341–361; these read LFHPVSIVIIGHLMIFILAFP, LFKILGVLSIFIVGFFLPFIF, ILYLSFLLLSFLSIFGAFKIT, LFLSIAYLLFILIIAELFVKF, IFVDILFSIGIIAFLLIVLIY, IIAFMILVLLGYKAGVLMLFI, MVLLAFALLIFLGIMGKIILL, GTIYLDFGIFGGLFAMLLGVI, and LLLAYCEIGINYGFLVVLSLL.

It localises to the cell membrane. This is an uncharacterized protein from Methanocaldococcus jannaschii (strain ATCC 43067 / DSM 2661 / JAL-1 / JCM 10045 / NBRC 100440) (Methanococcus jannaschii).